A 464-amino-acid chain; its full sequence is ATP synthase subunit beta (464 aa).

Residue Gly150–Thr157 participates in ATP binding.

The protein belongs to the ATPase alpha/beta chains family. F-type ATPases have 2 components, CF(1) - the catalytic core - and CF(0) - the membrane proton channel. CF(1) has five subunits: alpha(3), beta(3), gamma(1), delta(1), epsilon(1). CF(0) has three main subunits: a(1), b(2) and c(9-12). The alpha and beta chains form an alternating ring which encloses part of the gamma chain. CF(1) is attached to CF(0) by a central stalk formed by the gamma and epsilon chains, while a peripheral stalk is formed by the delta and b chains.

It localises to the cell membrane. The catalysed reaction is ATP + H2O + 4 H(+)(in) = ADP + phosphate + 5 H(+)(out). Its function is as follows. Produces ATP from ADP in the presence of a proton gradient across the membrane. The catalytic sites are hosted primarily by the beta subunits. The protein is ATP synthase subunit beta of Dehalococcoides mccartyi (strain ATCC BAA-2100 / JCM 16839 / KCTC 5957 / BAV1).